The following is a 525-amino-acid chain: GMP synthase [glutamine-hydrolyzing] (525 aa).

In terms of domain architecture, Glutamine amidotransferase type-1 spans 9–207 (RILILDFGSQ…VQDICGCEAL (199 aa)). C86 (nucleophile) is an active-site residue. Catalysis depends on residues H181 and E183. The 193-residue stretch at 208–400 (WTPSNIVEDA…LGLPYDMVYR (193 aa)) folds into the GMPS ATP-PPase domain. Residue 235–241 (SGGVDSS) participates in ATP binding.

Homodimer.

The enzyme catalyses XMP + L-glutamine + ATP + H2O = GMP + L-glutamate + AMP + diphosphate + 2 H(+). The protein operates within purine metabolism; GMP biosynthesis; GMP from XMP (L-Gln route): step 1/1. Catalyzes the synthesis of GMP from XMP. This Pseudomonas putida (strain W619) protein is GMP synthase [glutamine-hydrolyzing].